Reading from the N-terminus, the 341-residue chain is Anthranilate phosphoribosyltransferase (341 aa).

5-phospho-alpha-D-ribose 1-diphosphate contacts are provided by residues Gly84, 94-97 (NVST), 112-120 (KHGGRAASS), and Ser124. Gly84 lines the anthranilate pocket. A Mg(2+)-binding site is contributed by Ser96. An anthranilate-binding site is contributed by Arg170. 2 residues coordinate Mg(2+): Asp229 and Glu230.

The protein belongs to the anthranilate phosphoribosyltransferase family. As to quaternary structure, homodimer. It depends on Mg(2+) as a cofactor.

The catalysed reaction is N-(5-phospho-beta-D-ribosyl)anthranilate + diphosphate = 5-phospho-alpha-D-ribose 1-diphosphate + anthranilate. It participates in amino-acid biosynthesis; L-tryptophan biosynthesis; L-tryptophan from chorismate: step 2/5. Functionally, catalyzes the transfer of the phosphoribosyl group of 5-phosphorylribose-1-pyrophosphate (PRPP) to anthranilate to yield N-(5'-phosphoribosyl)-anthranilate (PRA). This chain is Anthranilate phosphoribosyltransferase, found in Methylobacillus flagellatus (strain ATCC 51484 / DSM 6875 / VKM B-1610 / KT).